A 276-amino-acid polypeptide reads, in one-letter code: Carbonic anhydrase Nec1 (276 aa).

A signal peptide spans methionine 1–alanine 27. The Alpha-carbonic anhydrase domain occupies arginine 34–cysteine 270. An intrachain disulfide couples cysteine 59 to cysteine 220. Histidine 98 acts as the Proton acceptor in catalysis. Histidine 124 and histidine 126 together coordinate Zn(2+). Residue asparagine 134 is glycosylated (N-linked (GlcNAc...) asparagine). Histidine 143 lines the Zn(2+) pocket. Positions threonine 216–threonine 217 are substrate binding.

It belongs to the alpha-class carbonic anhydrase family. As to quaternary structure, homodimer. It depends on Zn(2+) as a cofactor. In terms of tissue distribution, confined to nectaries.

It carries out the reaction hydrogencarbonate + H(+) = CO2 + H2O. It functions in the pathway one-carbon metabolism. Involved in the production of blood-red nectar containing the alkaloid nesocodin and that serves as a visual attractant for pollinator visitation, including vertebrates such as Phelsuma geckos. The nectar is initially acidic and pale yellow, but slowly becomes alkaline before turning into red within 24 hours. Together with NEC2 and NEC3, facilitates the condensation of sinapaldehyde ((E)-3,5-dimethoxy-4-hydroxycinnamaldehyde) and proline to form nesocodin, a pigment with a stable imine bond. Mediates the alkalinization (pH increase) of the flower nectar by catalyzing the reversible hydration of carbon dioxide. This chain is Carbonic anhydrase Nec1, found in Nesocodon mauritianus (Blue Mauritius bellflower).